We begin with the raw amino-acid sequence, 281 residues long: Pantothenate synthetase (281 aa).

26-33 (MGSLHEGH) is an ATP binding site. The Proton donor role is filled by His-33. Gln-57 serves as a coordination point for (R)-pantoate. Residue Gln-57 participates in beta-alanine binding. ATP is bound at residue 144–147 (GKKD). Residue Gln-150 participates in (R)-pantoate binding. ATP-binding positions include Ala-173 and 181 to 184 (LSSR).

This sequence belongs to the pantothenate synthetase family. In terms of assembly, homodimer.

It is found in the cytoplasm. The enzyme catalyses (R)-pantoate + beta-alanine + ATP = (R)-pantothenate + AMP + diphosphate + H(+). It participates in cofactor biosynthesis; (R)-pantothenate biosynthesis; (R)-pantothenate from (R)-pantoate and beta-alanine: step 1/1. In terms of biological role, catalyzes the condensation of pantoate with beta-alanine in an ATP-dependent reaction via a pantoyl-adenylate intermediate. This Methylibium petroleiphilum (strain ATCC BAA-1232 / LMG 22953 / PM1) protein is Pantothenate synthetase.